The primary structure comprises 51 residues: Protein HokD (51 aa).

A helical transmembrane segment spans residues 5–25; the sequence is KAMLIALIVICLTVIVTALVT.

This sequence belongs to the Hok/Gef family.

It is found in the cell inner membrane. Its function is as follows. Toxic component of a type I toxin-antitoxin (TA) system. When overexpressed kills cells within minutes; causes collapse of the transmembrane potential and arrest of respiration. Its toxic effect is probably neutralized by an antisense antitoxin Sok RNA. The protein is Protein HokD (hokD) of Escherichia coli O157:H7.